Consider the following 377-residue polypeptide: Flap endonuclease 1 (377 aa).

The tract at residues 1–104 (MGIQGLAKLL…GELAKRTERR (104 aa)) is N-domain. Residue Asp34 coordinates Mg(2+). Positions 47 and 70 each coordinate DNA. The Mg(2+) site is built by Asp86, Glu158, Glu160, Asp179, and Asp181. An I-domain region spans residues 122–253 (NIDKFSRRLV…KRSVDLIRQH (132 aa)). Glu158 contributes to the DNA binding site. DNA-binding residues include Gly231 and Asp233. Asp233 lines the Mg(2+) pocket. Residues 336–344 (TQGRLDSFF) form an interaction with PCNA region. The segment at 337–377 (QGRLDSFFKVLPSPANKRKLQDGKGSQNKKAKTGGKFKRPK) is disordered. Residues 363 to 377 (QNKKAKTGGKFKRPK) are compositionally biased toward basic residues.

This sequence belongs to the XPG/RAD2 endonuclease family. FEN1 subfamily. In terms of assembly, interacts with PCNA. Three molecules of FEN1 bind to one PCNA trimer with each molecule binding to one PCNA monomer. PCNA stimulates the nuclease activity without altering cleavage specificity. It depends on Mg(2+) as a cofactor. Post-translationally, phosphorylated. Phosphorylation upon DNA damage induces relocalization to the nuclear plasma.

The protein resides in the nucleus. It localises to the nucleolus. The protein localises to the nucleoplasm. It is found in the mitochondrion. Functionally, structure-specific nuclease with 5'-flap endonuclease and 5'-3' exonuclease activities involved in DNA replication and repair. During DNA replication, cleaves the 5'-overhanging flap structure that is generated by displacement synthesis when DNA polymerase encounters the 5'-end of a downstream Okazaki fragment. It enters the flap from the 5'-end and then tracks to cleave the flap base, leaving a nick for ligation. Also involved in the long patch base excision repair (LP-BER) pathway, by cleaving within the apurinic/apyrimidinic (AP) site-terminated flap. Acts as a genome stabilization factor that prevents flaps from equilibrating into structures that lead to duplications and deletions. Also possesses 5'-3' exonuclease activity on nicked or gapped double-stranded DNA, and exhibits RNase H activity. Also involved in replication and repair of rDNA and in repairing mitochondrial DNA. In Nematostella vectensis (Starlet sea anemone), this protein is Flap endonuclease 1.